The chain runs to 598 residues: MGIPADNLQSRAKASFDTRVSAAELALARGVVPSLANGEELLYRNPDPENGDPSFIVSFTKGLPHDDNGAIIDPDDFLAFVRAINSGDEKEIADLTLGPARDPDTGLPIWRSDLANSLELEVRGWENSSAGLTFDLEGPDAQSIAMPPAPVLTSPELIAEIAELYLMALGREIEFSEFDSPKNAEYIQFAIDQLNGLEWFNTPAMLGDPPAEIRRRRGEVTVGNLFRGILPGSEVGPYLSQYIIVGSKQIGSATGGNKTLVSPNAADEFDGEIAYGSITISQRVRIATPGRDFMTDLKVFLDVQDAADFRGFESYEPGARLIRTIRDLATWVHFDALYEAYLNACLILLANRVPFDPNIPFQQEDKLDNQDVFVNFGDAHVLSLVTEVATRALKAVRYQKFNIHRRLRPEATGGLISVNKIAAEKGESVFPEVDLAVEELEDILEKAEISNRKQNIADGDPDPDPSFLLPQAFAEGSPFHPSYGSGHAVVAGACVTILKAFFDSNFQIDQVFEVDKDEDKLVKSSFKGTLTVAGELNKLADNIAIGRNMAGVHYFSDQFESILLGEQVAIGILEEQSLTYGENFFFNLPKFDGTTIQI.

Ca(2+)-binding residues include phenylalanine 361, glutamine 363, aspartate 365, aspartate 368, and glutamine 370. Vanadate-binding residues include lysine 400 and arginine 408. Histidine 480 is a catalytic residue. Vanadate is bound by residues serine 485, glycine 486, histidine 487, arginine 547, and histidine 553. Histidine 487 is an active-site residue.

Belongs to the vanadium-dependent haloperoxidase family. As to quaternary structure, homododecamer. Requires Ca(2+) as cofactor. The cofactor is vanadate.

It catalyses the reaction RH + Br(-) + H2O2 = RBr + 2 H2O.. Its function is as follows. Catalyzes the halogenation of organic substrates in the presence of hydrogen peroxide. The polypeptide is Vanadium-dependent bromoperoxidase (Corallina officinalis (Coral seaweed)).